The primary structure comprises 224 residues: ATP synthase subunit b (224 aa).

A helical membrane pass occupies residues 2–22; it reads TPSLGLIFWQSVIFLISFIIL.

Belongs to the ATPase B chain family. In terms of assembly, F-type ATPases have 2 components, F(1) - the catalytic core - and F(0) - the membrane proton channel. F(1) has five subunits: alpha(3), beta(3), gamma(1), delta(1), epsilon(1). F(0) has three main subunits: a(1), b(2) and c(10-14). The alpha and beta chains form an alternating ring which encloses part of the gamma chain. F(1) is attached to F(0) by a central stalk formed by the gamma and epsilon chains, while a peripheral stalk is formed by the delta and b chains.

The protein localises to the cell membrane. F(1)F(0) ATP synthase produces ATP from ADP in the presence of a proton or sodium gradient. F-type ATPases consist of two structural domains, F(1) containing the extramembraneous catalytic core and F(0) containing the membrane proton channel, linked together by a central stalk and a peripheral stalk. During catalysis, ATP synthesis in the catalytic domain of F(1) is coupled via a rotary mechanism of the central stalk subunits to proton translocation. Functionally, component of the F(0) channel, it forms part of the peripheral stalk, linking F(1) to F(0). This is ATP synthase subunit b from Karelsulcia muelleri (strain GWSS) (Sulcia muelleri).